A 32-amino-acid chain; its full sequence is Photosystem II reaction center protein Psb30 (32 aa).

Residues 3 to 23 traverse the membrane as a helical segment; sequence IVIVQLGSLALITLAGPIIIV.

It belongs to the Psb30/Ycf12 family. As to quaternary structure, PSII is composed of 1 copy each of membrane proteins PsbA, PsbB, PsbC, PsbD, PsbE, PsbF, PsbH, PsbI, PsbJ, PsbK, PsbL, PsbM, PsbT, PsbY, PsbZ, Psb30/Ycf12, peripheral proteins of the oxygen-evolving complex and a large number of cofactors. It forms dimeric complexes.

Its subcellular location is the plastid. The protein resides in the chloroplast thylakoid membrane. Its function is as follows. A core subunit of photosystem II (PSII), probably helps stabilize the reaction center. The chain is Photosystem II reaction center protein Psb30 from Euglena viridis (Cercaria viridis).